A 486-amino-acid chain; its full sequence is Adenosylhomocysteinase (486 aa).

Residues Thr63, Asp147, and Glu209 each contribute to the substrate site. 210–212 (TTT) provides a ligand contact to NAD(+). Substrate contacts are provided by Lys239 and Asp243. NAD(+) is bound by residues Asn244, 273–278 (GYGDVG), Glu296, Asn331, 352–354 (IGH), and Asn400.

It belongs to the adenosylhomocysteinase family. NAD(+) is required as a cofactor.

It catalyses the reaction S-adenosyl-L-homocysteine + H2O = L-homocysteine + adenosine. The protein operates within amino-acid biosynthesis; L-homocysteine biosynthesis; L-homocysteine from S-adenosyl-L-homocysteine: step 1/1. Adenosylhomocysteine is a competitive inhibitor of S-adenosyl-L-methionine-dependent methyl transferase reactions; therefore adenosylhomocysteinase may play a key role in the control of methylations via regulation of the intracellular concentration of adenosylhomocysteine. This is Adenosylhomocysteinase from Trichomonas vaginalis.